The primary structure comprises 652 residues: Proline-rich receptor-like protein kinase PERK1 (652 aa).

The tract at residues 1–137 (MSTAPSPGTT…PPSDSSDGLS (137 aa)) is disordered. The Extracellular portion of the chain corresponds to 1 to 139 (MSTAPSPGTT…SDSSDGLSTG (139 aa)). The segment covering 8–19 (GTTPSPSPPSPP) has biased composition (pro residues). Residues Asn-21 and Asn-50 are each glycosylated (N-linked (GlcNAc...) asparagine). Positions 26–112 (TPPPAASSPP…PSPNQGPPNT (87 aa)) are enriched in pro residues. Residues 113 to 137 (PSGSTPRTPSNTKPSPPSDSSDGLS) show a composition bias toward low complexity. A helical membrane pass occupies residues 140 to 160 (VVVGIAIGGVAILVILTLICL). The Cytoplasmic segment spans residues 161–652 (LCKKKRRRRH…TGQGYSGPSL (492 aa)). Residues 169–251 (RHDDEAAYYV…GGSDYSDLPV (83 aa)) form a disordered region. Positions 203–213 (NASRPSDNHVV) are enriched in polar residues. Residues 216-236 (LPPPKPPSPPRKPPPPPPPPA) show a composition bias toward pro residues. Thr-269 is modified (phosphothreonine). In terms of domain architecture, Protein kinase spans 280–559 (FSEANLLGQG…VRALEGNVSL (280 aa)). Residues 286–294 (LGQGGFGYV) and Lys-308 each bind ATP. The residue at position 353 (Tyr-353) is a Phosphotyrosine. Asp-404 serves as the catalytic Proton acceptor. Ser-408 and Ser-437 each carry phosphoserine. Phosphothreonine occurs at positions 438 and 443. Tyr-451 is modified (phosphotyrosine). A compositionally biased stretch (polar residues) spans 605–616 (YGTTGEYSNPTS). The interval 605-652 (YGTTGEYSNPTSDYGLYPSGSSSEGQATREMEMGKIKKTGQGYSGPSL) is disordered.

It belongs to the protein kinase superfamily. Ser/Thr protein kinase family. In terms of tissue distribution, mostly expressed in inflorescence bolt, flower buds and siliques, and, to a lower extent, in roots, seedlings and leaves.

Its subcellular location is the cell membrane. It carries out the reaction L-seryl-[protein] + ATP = O-phospho-L-seryl-[protein] + ADP + H(+). The catalysed reaction is L-threonyl-[protein] + ATP = O-phospho-L-threonyl-[protein] + ADP + H(+). This is Proline-rich receptor-like protein kinase PERK1 (PERK1) from Arabidopsis thaliana (Mouse-ear cress).